The following is a 1157-amino-acid chain: Pesticidal crystal protein Cry9Ca (1157 aa).

It belongs to the delta endotoxin family.

In terms of biological role, promotes colloidosmotic lysis by binding to the midgut epithelial cells of Lepidoptera larvae. Has a fairly broad spectrum of activity against members of the Pyralidae, Plutellidae, Sphingidae and Noctuidae families. It was the first insecticidal crystal protein characterized with activity against cutworms. No activity is observed against some beetles, such as the Colorado potato beetle. In Bacillus thuringiensis subsp. tolworthi, this protein is Pesticidal crystal protein Cry9Ca (cry9Ca).